Here is a 392-residue protein sequence, read N- to C-terminus: ESX-1 secretion-associated protein EspA (392 aa).

A disordered region spans residues 302–392 (TRQALRPRAD…GQKVLVRNVV (91 aa)). Residues 334–344 (QGMGGPVGMGG) are compositionally biased toward gly residues.

As to quaternary structure, homodimer; disulfide-linked.

It localises to the secreted. Functionally, required for secretion of EsxA (ESAT-6) and EsxB (CFP-10) and for virulence. The chain is ESX-1 secretion-associated protein EspA from Mycobacterium tuberculosis (strain CDC 1551 / Oshkosh).